A 279-amino-acid chain; its full sequence is Energy-coupling factor transporter ATP-binding protein EcfA1 (279 aa).

Residues 6 to 240 (ISVDHLTYQY…GTQLVEMGLD (235 aa)) form the ABC transporter domain. An ATP-binding site is contributed by 40-47 (GHNGSGKS).

The protein belongs to the ABC transporter superfamily. Energy-coupling factor EcfA family. Forms a stable energy-coupling factor (ECF) transporter complex composed of 2 membrane-embedded substrate-binding proteins (S component), 2 ATP-binding proteins (A component) and 2 transmembrane proteins (T component).

The protein resides in the cell membrane. ATP-binding (A) component of a common energy-coupling factor (ECF) ABC-transporter complex. Unlike classic ABC transporters this ECF transporter provides the energy necessary to transport a number of different substrates. This chain is Energy-coupling factor transporter ATP-binding protein EcfA1, found in Levilactobacillus brevis (strain ATCC 367 / BCRC 12310 / CIP 105137 / JCM 1170 / LMG 11437 / NCIMB 947 / NCTC 947) (Lactobacillus brevis).